The following is a 335-amino-acid chain: MTWFTPEVIDVILTVIKAIVILLAVVVAGALLSFVERRLLGWWQDRYGPNRVGPFGMFQIAADMLKMFFKEDWTPPFADKVIFTLAPVVAMSALLIAFAIIPITPTWGVADLNIGLLFFFAMAGLSVYAVLFAGWSSNNKFALLGSLRASAQTVSYEVFMGLALMGIVVQVGSFNMRDIVEYQAQNLWFIIPQFFGFCTFFIAGVAVTHRHPFDQPEAEQELADGYHIEYAGMKWGMFFVGEYIGIILISALLVTLFFGGWHGPFGILPQLSFVWFALKTAFFILLFILLRASIPRPRYDQVMDFSWKFCLPLTLINLLVTAAIVLWNTPAVAVQ.

The next 8 membrane-spanning stretches (helical) occupy residues 11 to 31 (VILT…AGAL), 81 to 101 (VIFT…FAII), 114 to 134 (IGLL…LFAG), 154 to 174 (VSYE…VGSF), 187 to 207 (LWFI…GVAV), 238 to 258 (FFVG…TLFF), 270 to 290 (QLSF…FILL), and 307 to 327 (WKFC…IVLW).

The protein belongs to the complex I subunit 1 family. NDH-1 is composed of 13 different subunits. Subunits NuoA, H, J, K, L, M, N constitute the membrane sector of the complex.

It is found in the cell inner membrane. It carries out the reaction a quinone + NADH + 5 H(+)(in) = a quinol + NAD(+) + 4 H(+)(out). In terms of biological role, NDH-1 shuttles electrons from NADH, via FMN and iron-sulfur (Fe-S) centers, to quinones in the respiratory chain. The immediate electron acceptor for the enzyme in this species is believed to be ubiquinone. Couples the redox reaction to proton translocation (for every two electrons transferred, four hydrogen ions are translocated across the cytoplasmic membrane), and thus conserves the redox energy in a proton gradient. This subunit may bind ubiquinone. This is NADH-quinone oxidoreductase subunit H from Pseudomonas fluorescens (strain Pf0-1).